The sequence spans 1293 residues: Phosphoribosylformylglycinamidine synthase (1293 aa).

ATP contacts are provided by residues 305 to 316 and Ala-676; that span reads GAATGSGGEIRD. The tract at residues 305–327 is disordered; it reads GAATGSGGEIRDEGATGRGSKPK. Mg(2+) contacts are provided by Asp-677, Glu-716, Asn-720, and Asp-884. ATP is bound at residue Ser-886. Residues 1040–1293 form the Glutamine amidotransferase type-1 domain; it reads MAILREQGVN…MFRNARVNLG (254 aa). Catalysis depends on Cys-1133, which acts as the Nucleophile. Residues His-1258 and Glu-1260 contribute to the active site.

In the N-terminal section; belongs to the FGAMS family. In terms of assembly, monomer.

It is found in the cytoplasm. It catalyses the reaction N(2)-formyl-N(1)-(5-phospho-beta-D-ribosyl)glycinamide + L-glutamine + ATP + H2O = 2-formamido-N(1)-(5-O-phospho-beta-D-ribosyl)acetamidine + L-glutamate + ADP + phosphate + H(+). It participates in purine metabolism; IMP biosynthesis via de novo pathway; 5-amino-1-(5-phospho-D-ribosyl)imidazole from N(2)-formyl-N(1)-(5-phospho-D-ribosyl)glycinamide: step 1/2. Phosphoribosylformylglycinamidine synthase involved in the purines biosynthetic pathway. Catalyzes the ATP-dependent conversion of formylglycinamide ribonucleotide (FGAR) and glutamine to yield formylglycinamidine ribonucleotide (FGAM) and glutamate. This chain is Phosphoribosylformylglycinamidine synthase, found in Shewanella oneidensis (strain ATCC 700550 / JCM 31522 / CIP 106686 / LMG 19005 / NCIMB 14063 / MR-1).